Consider the following 234-residue polypeptide: Phosphoglycolate phosphatase (234 aa).

Aspartate 9 (nucleophile) is an active-site residue. Mg(2+)-binding residues include aspartate 9 and aspartate 11. A substrate-binding site is contributed by lysine 162. Residues aspartate 185 and aspartate 189 each coordinate Mg(2+).

It belongs to the archaeal SPP-like hydrolase family. The cofactor is Mg(2+).

It catalyses the reaction 2-phosphoglycolate + H2O = glycolate + phosphate. Functionally, catalyzes the dephosphorylation of 2-phosphoglycolate. This Methanobrevibacter smithii (strain ATCC 35061 / DSM 861 / OCM 144 / PS) protein is Phosphoglycolate phosphatase.